We begin with the raw amino-acid sequence, 367 residues long: Anhydro-N-acetylmuramic acid kinase (367 aa).

Residue 11–18 coordinates ATP; that stretch reads GTSLDGVD.

It belongs to the anhydro-N-acetylmuramic acid kinase family.

It carries out the reaction 1,6-anhydro-N-acetyl-beta-muramate + ATP + H2O = N-acetyl-D-muramate 6-phosphate + ADP + H(+). The protein operates within amino-sugar metabolism; 1,6-anhydro-N-acetylmuramate degradation. Its pathway is cell wall biogenesis; peptidoglycan recycling. Its function is as follows. Catalyzes the specific phosphorylation of 1,6-anhydro-N-acetylmuramic acid (anhMurNAc) with the simultaneous cleavage of the 1,6-anhydro ring, generating MurNAc-6-P. Is required for the utilization of anhMurNAc either imported from the medium or derived from its own cell wall murein, and thus plays a role in cell wall recycling. This chain is Anhydro-N-acetylmuramic acid kinase, found in Rhodopseudomonas palustris (strain ATCC BAA-98 / CGA009).